We begin with the raw amino-acid sequence, 428 residues long: E3 ubiquitin-protein ligase RNF128 (428 aa).

The signal sequence occupies residues Met-1–Gly-38. N-linked (GlcNAc...) asparagine glycans are attached at residues Asn-48, Asn-59, and Asn-101. Residues Ser-75–Ile-183 enclose the PA domain. Residues Ile-208–Phe-228 traverse the membrane as a helical segment. The segment at Cys-277–Lys-318 adopts an RING-type; atypical zinc-finger fold. The span at Val-342 to Ser-351 shows a compositional bias: polar residues. The tract at residues Val-342–Ser-428 is disordered.

Auto-ubiquitinated. Controls the development of T-cell clonal anergy by ubiquitination. Expressed in brain, kidney, heart, liver, ovary, testis and thymus. Expression increased as early as 4 hours by 5- to 7-fold in anergized cultures as compared to resting or activated cells.

The protein resides in the cytoplasm. It localises to the endomembrane system. Its subcellular location is the cytoskeleton. The protein localises to the perinuclear region. It catalyses the reaction S-ubiquitinyl-[E2 ubiquitin-conjugating enzyme]-L-cysteine + [acceptor protein]-L-lysine = [E2 ubiquitin-conjugating enzyme]-L-cysteine + N(6)-ubiquitinyl-[acceptor protein]-L-lysine.. It functions in the pathway protein modification; protein ubiquitination. Functionally, E3 ubiquitin-protein ligase that catalyzes 'Lys-27', 'Lys-48'- or 'Lys-63'-linked polyubiquitin chains formation and plays a role in different biological processes such as modulation of immune response, cytoskeletal dynamics or protein homeostasis. Inhibits IL2 and IL4 transcription, thereby playing an important role in the induction of the anergic phenotype, a long-term stable state of T-lymphocyte unresponsiveness to antigenic stimulation associated with the blockade of interleukin production. Ubiquitinates ARPC5 with 'Lys-48' linkages and COR1A with 'Lys-63' linkages leading to their degradation, down-regulation of these cytoskeletal components results in impaired lamellipodium formation and reduced accumulation of F-actin at the immunological synapse. Functions in the patterning of the dorsal ectoderm; sensitizes ectoderm to respond to neural-inducing signals. Plays a positive role in innate immune response by promoting 'Lys-63'-linked ubiquitination of TBK1 after RNA- or DNA-virus infection. Regulates alveolar macrophage activation and neutrophil infiltration by interacting with TLR4, targeting it for degradation, and inhibiting NF-kappa-B activation, hence decreasing pro-inflammatory cytokines. Negatively regulates the IL-3/STAT5 signaling pathway by facilitating 'Lys-27'-linked polyubiquitination of IL3RA leading to its degradation via lysosomal pathway. Directly regulates the N-glycosylation process in the endoplasmic reticulum by targeting the glycosyl-transferase RPN1 for ubiquitination and degradation. Other substrates targeted for degradation by RNF128 include transmembrane proteins CD40L, CD83 or the tetraspanin CD151. This chain is E3 ubiquitin-protein ligase RNF128 (Rnf128), found in Mus musculus (Mouse).